The chain runs to 615 residues: 1-deoxy-D-xylulose-5-phosphate synthase (615 aa).

Thiamine diphosphate is bound by residues His-72 and 113–115 (GHA). Asp-144 contacts Mg(2+). Thiamine diphosphate is bound by residues 145 to 146 (GA), Asn-173, Tyr-281, and Glu-360. Asn-173 contacts Mg(2+).

It belongs to the transketolase family. DXPS subfamily. In terms of assembly, homodimer. Mg(2+) serves as cofactor. Thiamine diphosphate is required as a cofactor.

It catalyses the reaction D-glyceraldehyde 3-phosphate + pyruvate + H(+) = 1-deoxy-D-xylulose 5-phosphate + CO2. It participates in metabolic intermediate biosynthesis; 1-deoxy-D-xylulose 5-phosphate biosynthesis; 1-deoxy-D-xylulose 5-phosphate from D-glyceraldehyde 3-phosphate and pyruvate: step 1/1. Functionally, catalyzes the acyloin condensation reaction between C atoms 2 and 3 of pyruvate and glyceraldehyde 3-phosphate to yield 1-deoxy-D-xylulose-5-phosphate (DXP). The protein is 1-deoxy-D-xylulose-5-phosphate synthase of Thermus thermophilus (strain ATCC BAA-163 / DSM 7039 / HB27).